Reading from the N-terminus, the 224-residue chain is Urease accessory protein UreF (224 aa).

Belongs to the UreF family. In terms of assembly, ureD, UreF and UreG form a complex that acts as a GTP-hydrolysis-dependent molecular chaperone, activating the urease apoprotein by helping to assemble the nickel containing metallocenter of UreC. The UreE protein probably delivers the nickel.

It localises to the cytoplasm. Functionally, required for maturation of urease via the functional incorporation of the urease nickel metallocenter. The sequence is that of Urease accessory protein UreF from Enterobacter sp. (strain 638).